A 203-amino-acid polypeptide reads, in one-letter code: Holliday junction branch migration complex subunit RuvA (203 aa).

Residues 1–64 (MIGRLRGTLA…EDAQLLYGFI (64 aa)) are domain I. Residues 65–143 (GKRDRDFFRE…AWEVVPSMFA (79 aa)) form a domain II region. The flexible linker stretch occupies residues 144 to 154 (LVPNQPDMPAG). Residues 155–203 (QVASAESDAVSALISLGYKPQEASKAVSAIKDKNLSSEDMIRRALKGMI) form a domain III region.

The protein belongs to the RuvA family. As to quaternary structure, homotetramer. Forms an RuvA(8)-RuvB(12)-Holliday junction (HJ) complex. HJ DNA is sandwiched between 2 RuvA tetramers; dsDNA enters through RuvA and exits via RuvB. An RuvB hexamer assembles on each DNA strand where it exits the tetramer. Each RuvB hexamer is contacted by two RuvA subunits (via domain III) on 2 adjacent RuvB subunits; this complex drives branch migration. In the full resolvosome a probable DNA-RuvA(4)-RuvB(12)-RuvC(2) complex forms which resolves the HJ.

It is found in the cytoplasm. Its function is as follows. The RuvA-RuvB-RuvC complex processes Holliday junction (HJ) DNA during genetic recombination and DNA repair, while the RuvA-RuvB complex plays an important role in the rescue of blocked DNA replication forks via replication fork reversal (RFR). RuvA specifically binds to HJ cruciform DNA, conferring on it an open structure. The RuvB hexamer acts as an ATP-dependent pump, pulling dsDNA into and through the RuvAB complex. HJ branch migration allows RuvC to scan DNA until it finds its consensus sequence, where it cleaves and resolves the cruciform DNA. This chain is Holliday junction branch migration complex subunit RuvA, found in Pseudomonas fluorescens (strain SBW25).